The primary structure comprises 201 residues: Alpha-1-acid glycoprotein 2 (201 aa).

The signal sequence occupies residues methionine 1 to alanine 18. Glutamine 19 carries the pyrrolidone carboxylic acid modification. Disulfide bonds link cysteine 23–cysteine 165 and cysteine 90–cysteine 183. Asparagine 33 carries N-linked (GlcNAc...) (complex) asparagine glycosylation. N-linked (GlcNAc...) asparagine glycans are attached at residues asparagine 56, asparagine 72, asparagine 93, and asparagine 103.

The protein belongs to the calycin superfamily. Lipocalin family. In terms of processing, N-glycosylated. N-glycan heterogeneity at Asn-33: Hex5HexNAc4 (minor), Hex6HexNAc5 (major) and dHex1Hex6HexNAc5 (minor). Expressed by the liver and secreted in plasma.

It is found in the secreted. Functions as a transport protein in the blood stream. Binds various hydrophobic ligands in the interior of its beta-barrel domain. Also binds synthetic drugs and influences their distribution and availability. Appears to function in modulating the activity of the immune system during the acute-phase reaction. The chain is Alpha-1-acid glycoprotein 2 (ORM2) from Homo sapiens (Human).